A 512-amino-acid polypeptide reads, in one-letter code: Cytochrome P450 71BT1 (512 aa).

Positions methionine 1 to lysine 24 are cleaved as a signal peptide. N-linked (GlcNAc...) asparagine glycosylation is found at asparagine 111 and asparagine 168. Cysteine 447 provides a ligand contact to heme.

This sequence belongs to the cytochrome P450 family.

This Catharanthus roseus (Madagascar periwinkle) protein is Cytochrome P450 71BT1.